The sequence spans 348 residues: Phospho-2-dehydro-3-deoxyheptonate aldolase, Trp-sensitive (348 aa).

This sequence belongs to the class-I DAHP synthase family.

It catalyses the reaction D-erythrose 4-phosphate + phosphoenolpyruvate + H2O = 7-phospho-2-dehydro-3-deoxy-D-arabino-heptonate + phosphate. It functions in the pathway metabolic intermediate biosynthesis; chorismate biosynthesis; chorismate from D-erythrose 4-phosphate and phosphoenolpyruvate: step 1/7. Its function is as follows. Stereospecific condensation of phosphoenolpyruvate (PEP) and D-erythrose-4-phosphate (E4P) giving rise to 3-deoxy-D-arabino-heptulosonate-7-phosphate (DAHP). The polypeptide is Phospho-2-dehydro-3-deoxyheptonate aldolase, Trp-sensitive (aroH) (Escherichia coli O6:H1 (strain CFT073 / ATCC 700928 / UPEC)).